Reading from the N-terminus, the 204-residue chain is Ribosomal RNA small subunit methyltransferase J (204 aa).

S-adenosyl-L-methionine contacts are provided by residues 55-56, 71-72, and aspartate 123; these read RD and ER.

It belongs to the methyltransferase superfamily. RsmJ family.

The protein localises to the cytoplasm. The enzyme catalyses guanosine(1516) in 16S rRNA + S-adenosyl-L-methionine = N(2)-methylguanosine(1516) in 16S rRNA + S-adenosyl-L-homocysteine + H(+). Specifically methylates the guanosine in position 1516 of 16S rRNA. The protein is Ribosomal RNA small subunit methyltransferase J of Rhodopseudomonas palustris (strain ATCC BAA-98 / CGA009).